The sequence spans 257 residues: Uridylate kinase (257 aa).

Position 8–11 (8–11 (KLSG)) interacts with ATP. Positions 21-26 (GSAGFG) are involved in allosteric activation by GTP. Gly56 contacts UMP. Residues Gly57 and Arg61 each contribute to the ATP site. UMP-binding positions include Asp75 and 136 to 143 (NGAPFFTT). The ATP site is built by Asn164, Tyr170, and Asp173.

Belongs to the UMP kinase family. As to quaternary structure, homohexamer.

The protein localises to the cytoplasm. The catalysed reaction is UMP + ATP = UDP + ADP. Its pathway is pyrimidine metabolism; CTP biosynthesis via de novo pathway; UDP from UMP (UMPK route): step 1/1. Allosterically activated by GTP. Inhibited by UTP. Its function is as follows. Catalyzes the reversible phosphorylation of UMP to UDP. This is Uridylate kinase from Deinococcus geothermalis (strain DSM 11300 / CIP 105573 / AG-3a).